Consider the following 119-residue polypeptide: Phosphoribosyl-AMP cyclohydrolase (119 aa).

D77 is a Mg(2+) binding site. C78 is a Zn(2+) binding site. 2 residues coordinate Mg(2+): D79 and D81. The Zn(2+) site is built by C94 and C101.

It belongs to the PRA-CH family. Homodimer. Mg(2+) is required as a cofactor. Zn(2+) serves as cofactor.

The protein localises to the cytoplasm. The catalysed reaction is 1-(5-phospho-beta-D-ribosyl)-5'-AMP + H2O = 1-(5-phospho-beta-D-ribosyl)-5-[(5-phospho-beta-D-ribosylamino)methylideneamino]imidazole-4-carboxamide. Its pathway is amino-acid biosynthesis; L-histidine biosynthesis; L-histidine from 5-phospho-alpha-D-ribose 1-diphosphate: step 3/9. Functionally, catalyzes the hydrolysis of the adenine ring of phosphoribosyl-AMP. This is Phosphoribosyl-AMP cyclohydrolase from Cereibacter sphaeroides (strain ATCC 17029 / ATH 2.4.9) (Rhodobacter sphaeroides).